Consider the following 367-residue polypeptide: Leucine-rich repeat-containing protein 28 (367 aa).

LRR repeat units follow at residues 16–36 (KHKN…ELLK), 42–63 (YLER…LAQK), 66–87 (NLVE…IGSL), 89–111 (KLQS…GRLK), 112–133 (SLRH…IGKL), 135–156 (ELQT…LYQC), 158–179 (SLQY…LCQL), 181–202 (SLNE…LGRS), and 204–226 (ELQY…LYNK).

The sequence is that of Leucine-rich repeat-containing protein 28 (lrrc28) from Xenopus tropicalis (Western clawed frog).